The chain runs to 233 residues: 7-cyano-7-deazaguanine synthase (233 aa).

ATP is bound at residue 8–18 (LSGGLDSTTCM). Residues Cys186, Cys194, Cys197, and Cys200 each contribute to the Zn(2+) site.

This sequence belongs to the QueC family. Homodimer. Zn(2+) serves as cofactor.

The enzyme catalyses 7-carboxy-7-deazaguanine + NH4(+) + ATP = 7-cyano-7-deazaguanine + ADP + phosphate + H2O + H(+). It functions in the pathway purine metabolism; 7-cyano-7-deazaguanine biosynthesis. In terms of biological role, catalyzes the ATP-dependent conversion of 7-carboxy-7-deazaguanine (CDG) to 7-cyano-7-deazaguanine (preQ(0)). The polypeptide is 7-cyano-7-deazaguanine synthase (Desulfitobacterium hafniense (strain DSM 10664 / DCB-2)).